Here is a 167-residue protein sequence, read N- to C-terminus: Ureidoglycolate lyase (167 aa).

It belongs to the ureidoglycolate lyase family. In terms of assembly, homodimer. The cofactor is Ni(2+).

The catalysed reaction is (S)-ureidoglycolate = urea + glyoxylate. It functions in the pathway nitrogen metabolism; (S)-allantoin degradation. In terms of biological role, catalyzes the catabolism of the allantoin degradation intermediate (S)-ureidoglycolate, generating urea and glyoxylate. Involved in the utilization of allantoin as nitrogen source. This Pseudomonas putida (strain W619) protein is Ureidoglycolate lyase.